Consider the following 296-residue polypeptide: MLKGSIVALVTPFTKYGNVDYSELEFLVNKHCEAGTDAIVAVGTTGESTTLTHEEHIAVVNAMVELSAGRIDIIAGNGSNSTSEAVQLTEKMTQAGVSGFLNVTPYYNKPSLAGLIAHYQACADATDKPQILYNVPGRTSLDMTPDMVEQLAKIDNVIGIKEATGDVSRVQELKERCGDDFILLSGDDPTAREFMFAGGHGVISVTANIVPAKMKELVTAALAGDKESANQIDAELAPLHNMLFVESNPIPVKWSLALMGWVSANYRLPLTPPEESNQQLIESVLQKANLLNIQES.

Thr-45 provides a ligand contact to pyruvate. Tyr-133 serves as the catalytic Proton donor/acceptor. The Schiff-base intermediate with substrate role is filled by Lys-161. Position 203 (Ile-203) interacts with pyruvate.

This sequence belongs to the DapA family. In terms of assembly, homotetramer; dimer of dimers.

Its subcellular location is the cytoplasm. It catalyses the reaction L-aspartate 4-semialdehyde + pyruvate = (2S,4S)-4-hydroxy-2,3,4,5-tetrahydrodipicolinate + H2O + H(+). The protein operates within amino-acid biosynthesis; L-lysine biosynthesis via DAP pathway; (S)-tetrahydrodipicolinate from L-aspartate: step 3/4. Its function is as follows. Catalyzes the condensation of (S)-aspartate-beta-semialdehyde [(S)-ASA] and pyruvate to 4-hydroxy-tetrahydrodipicolinate (HTPA). This is 4-hydroxy-tetrahydrodipicolinate synthase from Idiomarina loihiensis (strain ATCC BAA-735 / DSM 15497 / L2-TR).